Consider the following 580-residue polypeptide: MSDTWSSIQAHKKQLDSLRERLQRRRKQDSGHLDLRNPEAALSPTFRSDSPVPTAPTSSGPKPSTTSVAPELATDPELEKKLLHHLSDLALTLPTDAVSIRLAISTPDAPATQDGVESLLQKFAAQELIEVKRGLLQDDAHPTLVTYADHSKLSAMMGAVADKKGLGEVAGTIAGQKRRAEQDLTTVTTFASSLASGLASSASEPAKEPAKKSRKHAASDVDLEIESLLNQQSTKEQQSKKVSQEILELLNTTTAKEQSIVEKFRSRGRAQVQEFCDYGTKEECMKASDADRPCRKLHFRRIINKHTDESLGDCSFLNTCFHMDTCKYVHYEIDACVDSESPGSKEHMPSQELALTQSVGGDSSADRLFPPQWICCDIRYLDVSILGKFAVVMADPPWDIHMELPYGTLTDDEMRRLNIPVLQDDGFLFLWVTGRAMELGRECLNLWGYERVDEIIWVKTNQLQRIIRTGRTGHWLNHGKEHCLVGVKGNPQGFNQGLDCDVIVAEVRSTSHKPDEIYGMIERLSPGTRKIELFGRPHNVQPNWITLGNQLDGIHLLDPDVVARFKQRYPDGIISKPKNL.

Residues 1 to 70 (MSDTWSSIQA…PKPSTTSVAP (70 aa)) form a disordered region. S2 carries the post-translational modification N-acetylserine; alternate. Residue S2 is modified to Phosphoserine; alternate. Residues 28 to 37 (QDSGHLDLRN) show a composition bias toward basic and acidic residues. S43, S48, and S50 each carry phosphoserine. Low complexity predominate over residues 55–67 (APTSSGPKPSTTS). Residues K177, K211, K212, and K215 each participate in a glycyl lysine isopeptide (Lys-Gly) (interchain with G-Cter in SUMO1) cross-link. The segment at 198–217 (LASSASEPAKEPAKKSRKHA) is disordered. A Nuclear localization signal motif is present at residues 210 to 215 (AKKSRK). Phosphoserine is present on residues S219, S243, and S350. Residues 377 to 378 (DI) and D395 contribute to the S-adenosyl-L-methionine site. Residues 396-410 (PPWDIHMELPYGTLT) form a gate loop 1 region. 2 interaction with METTL14 regions span residues 450–454 (ERVDE) and 464–480 (QRII…NHGK). Residues 462–479 (QLQRIIRTGRTGHWLNHG) form an interphase loop region. A positively charged region required for RNA-binding region spans residues 465 to 478 (RIIRTGRTGHWLNH). A gate loop 2 region spans residues 507–515 (VRSTSHKPD). S-adenosyl-L-methionine contacts are provided by residues K513, 536–539 (RPHN), and 549–550 (NQ).

The protein belongs to the MT-A70-like family. Heterodimer; heterodimerizes with METTL14 to form an antiparallel heterodimer that constitutes an active methyltransferase. Component of the WMM complex, a N6-methyltransferase complex composed of a catalytic subcomplex, named MAC, and of an associated subcomplex, named MACOM. The MAC subcomplex is composed of METTL3 and METTL14. The MACOM subcomplex is composed of WTAP, ZC3H13, CBLL1/HAKAI, VIRMA, and, in some cases of RBM15 (RBM15 or RBM15B). Interacts with NCBP1/CBP80. Interacts with EIF4E. Interacts with EIF3B. Post-translationally, sumoylation inhibits the N6-adenosine-methyltransferase activity. Sumoylation does not affect subcellular location or interaction with METTL14. Desumoylated by SENP1. As to expression, present in both germ cells and somatic cells during testis development (at protein level).

The protein resides in the nucleus. The protein localises to the nucleus speckle. It is found in the cytoplasm. The catalysed reaction is an adenosine in mRNA + S-adenosyl-L-methionine = an N(6)-methyladenosine in mRNA + S-adenosyl-L-homocysteine + H(+). Its activity is regulated as follows. Methyltransferase activity is regulated by miRNAs via a sequence pairing mechanism. Methyltransferase activity is inhibited by sumoylation. In terms of biological role, the METTL3-METTL14 heterodimer forms a N6-methyltransferase complex that methylates adenosine residues at the N(6) position of some RNAs and regulates various processes such as the circadian clock, differentiation of embryonic and hematopoietic stem cells, cortical neurogenesis, response to DNA damage, differentiation of T-cells and primary miRNA processing. In the heterodimer formed with METTL14, METTL3 constitutes the catalytic core. N6-methyladenosine (m6A), which takes place at the 5'-[AG]GAC-3' consensus sites of some mRNAs, plays a role in mRNA stability, processing, translation efficiency and editing. M6A acts as a key regulator of mRNA stability: methylation is completed upon the release of mRNA into the nucleoplasm and promotes mRNA destabilization and degradation. In embryonic stem cells (ESCs), m6A methylation of mRNAs encoding key naive pluripotency-promoting transcripts results in transcript destabilization, promoting differentiation of ESCs. M6A regulates the length of the circadian clock: acts as an early pace-setter in the circadian loop by putting mRNA production on a fast-track for facilitating nuclear processing, thereby providing an early point of control in setting the dynamics of the feedback loop. M6A also regulates circadian regulation of hepatic lipid metabolism. M6A regulates spermatogonial differentiation and meiosis and is essential for male fertility and spermatogenesis. Also required for oogenesis. Involved in the response to DNA damage: in response to ultraviolet irradiation, METTL3 rapidly catalyzes the formation of m6A on poly(A) transcripts at DNA damage sites, leading to the recruitment of POLK to DNA damage sites. M6A is also required for T-cell homeostasis and differentiation: m6A methylation of transcripts of SOCS family members (SOCS1, SOCS3 and CISH) in naive T-cells promotes mRNA destabilization and degradation, promoting T-cell differentiation. Inhibits the type I interferon response by mediating m6A methylation of IFNB. M6A also regulates cortical neurogenesis: m6A methylation of transcripts related to transcription factors, neural stem cells, the cell cycle and neuronal differentiation during brain development promotes their destabilization and decay, promoting differentiation of radial glial cells. M6A also takes place in other RNA molecules, such as primary miRNA (pri-miRNAs). Mediates m6A methylation of Xist RNA, thereby participating in random X inactivation: m6A methylation of Xist leads to target YTHDC1 reader on Xist and promote transcription repression activity of Xist. METTL3 mediates methylation of pri-miRNAs, marking them for recognition and processing by DGCR8. Acts as a positive regulator of mRNA translation independently of the methyltransferase activity: promotes translation by interacting with the translation initiation machinery in the cytoplasm. This is N(6)-adenosine-methyltransferase catalytic subunit METTL3 from Mus musculus (Mouse).